Consider the following 208-residue polypeptide: Attacin-A (208 aa).

Residues 1-20 form the signal peptide; it reads MQSFKICFFISCLSVVLVKG. Residues 21-47 constitute a propeptide that is removed on maturation; that stretch reads QFGGTVSSNPNGGLDVNARLSKTIGDP.

As to expression, hemolymph and fat body.

The protein resides in the secreted. Its function is as follows. Hemolymph antibacterial protein against Gram-negative bacteria. This chain is Attacin-A, found in Glossina morsitans morsitans (Savannah tsetse fly).